The following is a 457-amino-acid chain: Cystathionine beta-lyase, chloroplastic (457 aa).

The N-terminal 51 residues, 1-51 (MFSRPFVTPVTIDLQVKSITAGNMWEGLGFYKPANSKSNQMICSKGFRLNC), are a transit peptide targeting the chloroplast. Residues Tyr120, Arg122, Gly150, Met151, Ser268, and Thr270 each coordinate pyridoxal 5'-phosphate. Lys271 bears the N6-(pyridoxal phosphate)lysine mark.

Belongs to the trans-sulfuration enzymes family. As to quaternary structure, forms homodimers. May form homotetramers from two homodimers. The cofactor is pyridoxal 5'-phosphate.

It localises to the plastid. Its subcellular location is the chloroplast. It catalyses the reaction L,L-cystathionine + H2O = L-homocysteine + pyruvate + NH4(+). The enzyme catalyses an S-substituted L-cysteine + H2O = a thiol + pyruvate + NH4(+). Catalyzes the degradation of cystathionine. This Mimosa pudica (Sensitive plant) protein is Cystathionine beta-lyase, chloroplastic.